The chain runs to 495 residues: MRNPTLLQCFHWYYPEGGKLWPELAERADGFNDIGINMVWLPPAYKGASGGYSVGYDSYDLFDLGEFDQKGSIPTKYGDKAQLLAAIDALKRNDIAVLLDVVVNHKMGADEKEAIRVQRVNADDRTQIDEEIIECEGWTRYTFPARAGQYSQFIWDFKCFSGIDHIENPDEDGIFKIVNDYTGEGWNDQVDDELGNFDYLMGENIDFRNHAVTEEIKYWARWVMEQTQCDGFRLDAVKHIPAWFYKEWIEHVQEVAPKPLFIVAEYWSHEVDKLQTYIDQVEGKTMLFDAPLQMKFHEASRMGRDYDMTQIFTGTLVEADPFHAVTLVANHDTQPLQALEAPVEPWFKPLAYALILLRENGVPSVFYPDLYGAHYEDVGGDGQTYPIDMPIIEQLDELILARQRFAHGVQTLFFDHPNCIAFSRSGTDEFPGCVVVMSNGDDGEKTIHLGENYGNKTWRDFLGNRQERVVTDENGEATFFCNGGSVSVWVIEEVI.

Ca(2+) contacts are provided by Asn-104 and Asp-198. Asp-235 serves as the catalytic Nucleophile. His-239 lines the Ca(2+) pocket. Glu-265 (proton donor) is an active-site residue.

Belongs to the glycosyl hydrolase 13 family. In terms of assembly, monomer. Ca(2+) is required as a cofactor.

It is found in the cytoplasm. The enzyme catalyses Endohydrolysis of (1-&gt;4)-alpha-D-glucosidic linkages in polysaccharides containing three or more (1-&gt;4)-alpha-linked D-glucose units.. In Escherichia coli (strain K12), this protein is Cytoplasmic alpha-amylase (amyA).